A 361-amino-acid chain; its full sequence is Histidinol-phosphate aminotransferase (361 aa).

The residue at position 221 (Lys-221) is an N6-(pyridoxal phosphate)lysine.

Belongs to the class-II pyridoxal-phosphate-dependent aminotransferase family. Histidinol-phosphate aminotransferase subfamily. Pyridoxal 5'-phosphate serves as cofactor.

The catalysed reaction is L-histidinol phosphate + 2-oxoglutarate = 3-(imidazol-4-yl)-2-oxopropyl phosphate + L-glutamate. It participates in amino-acid biosynthesis; L-histidine biosynthesis; L-histidine from 5-phospho-alpha-D-ribose 1-diphosphate: step 7/9. This chain is Histidinol-phosphate aminotransferase, found in Methanocella arvoryzae (strain DSM 22066 / NBRC 105507 / MRE50).